A 212-amino-acid chain; its full sequence is Tetraspanin-31-B (212 aa).

The Cytoplasmic portion of the chain corresponds to 1–12 (MVCGGFTCSKNA). Residues 13–33 (LCALNVVYMLVGVLLIIVAAW) traverse the membrane as a helical segment. At 34-44 (GKGFGIVSSIH) the chain is on the extracellular side. Residues 45–65 (IIGGVIAIGVFLLLIAIIGLI) form a helical membrane-spanning segment. The Cytoplasmic segment spans residues 66–72 (GAVSHHQ). A helical membrane pass occupies residues 73–93 (VMLFIYMVVLILVFIFQFIVS). Residues 94–175 (CSCLAMNRSQ…MLNHADEALK (82 aa)) are Extracellular-facing. Asn-100, Asn-109, Asn-117, and Asn-134 each carry an N-linked (GlcNAc...) asparagine glycan. A helical transmembrane segment spans residues 176-196 (ILGGVGLFFSFTEILGVWLAF). The Cytoplasmic segment spans residues 197 to 212 (RYRNQKDPRANPSAFL).

This sequence belongs to the tetraspanin (TM4SF) family.

The protein localises to the membrane. In Xenopus laevis (African clawed frog), this protein is Tetraspanin-31-B (tspan31-b).